Reading from the N-terminus, the 409-residue chain is NADH-quinone oxidoreductase subunit D (409 aa).

Belongs to the complex I 49 kDa subunit family. NDH-1 is composed of 14 different subunits. Subunits NuoB, C, D, E, F, and G constitute the peripheral sector of the complex.

Its subcellular location is the cell inner membrane. It carries out the reaction a quinone + NADH + 5 H(+)(in) = a quinol + NAD(+) + 4 H(+)(out). NDH-1 shuttles electrons from NADH, via FMN and iron-sulfur (Fe-S) centers, to quinones in the respiratory chain. The immediate electron acceptor for the enzyme in this species is believed to be ubiquinone. Couples the redox reaction to proton translocation (for every two electrons transferred, four hydrogen ions are translocated across the cytoplasmic membrane), and thus conserves the redox energy in a proton gradient. The protein is NADH-quinone oxidoreductase subunit D (nuoD) of Thermus thermophilus (strain ATCC BAA-163 / DSM 7039 / HB27).